The chain runs to 783 residues: Cation/H(+) antiporter 2 (783 aa).

The next 12 helical transmembrane spans lie at 19-39, 43-63, 81-101, 121-141, 145-165, 186-206, 208-228, 242-262, 300-320, 323-343, 355-375, and 391-411; these read LNTM…FYLL, CGQA…PVLL, YYSF…GLEV, FVVS…LFGI, YFTF…PVVV, ALFI…FISG, IILE…INMV, YLSK…GITI, EFVL…IALT, FYLG…IGVI, YWLF…LLLD, and MMVA…SFLL.

This sequence belongs to the monovalent cation:proton antiporter 2 (CPA2) transporter (TC 2.A.37) family. CHX (TC 2.A.37.4) subfamily. In terms of tissue distribution, specifically expressed in pollen.

The protein resides in the membrane. Its function is as follows. May operate as a cation/H(+) antiporter. The protein is Cation/H(+) antiporter 2 (CHX2) of Arabidopsis thaliana (Mouse-ear cress).